The following is a 236-amino-acid chain: Uridylate kinase (236 aa).

10-13 (KLSG) is a binding site for ATP. The tract at residues 18–23 (GEDGYG) is involved in allosteric activation by GTP. Position 52 (glycine 52) interacts with UMP. ATP is bound by residues glycine 53 and arginine 57. Residues aspartate 72 and 133–140 (TGNPYFTT) contribute to the UMP site. ATP-binding residues include threonine 160, tyrosine 166, and aspartate 169.

The protein belongs to the UMP kinase family. Homohexamer.

It localises to the cytoplasm. It carries out the reaction UMP + ATP = UDP + ADP. Its pathway is pyrimidine metabolism; CTP biosynthesis via de novo pathway; UDP from UMP (UMPK route): step 1/1. Allosterically activated by GTP. Inhibited by UTP. Catalyzes the reversible phosphorylation of UMP to UDP. In Chlorobium phaeobacteroides (strain DSM 266 / SMG 266 / 2430), this protein is Uridylate kinase.